Reading from the N-terminus, the 481-residue chain is UDP-glycosyltransferase 72E2 (481 aa).

The active-site Proton acceptor is His18. Residue His18 coordinates an anthocyanidin. Asp111 acts as the Charge relay in catalysis. 6 residues coordinate UDP-alpha-D-glucose: Ala346, Gln348, His363, Trp366, Ser368, and Glu371. An an anthocyanidin-binding site is contributed by Ala386. UDP-alpha-D-glucose-binding residues include Glu387 and Gln388.

The protein belongs to the UDP-glycosyltransferase family. In terms of tissue distribution, expressed in seedlings and roots.

The enzyme catalyses (E)-4-coumarate + UDP-alpha-D-glucose = 4-O-(beta-D-glucosyl)-trans-4-coumarate + UDP + H(+). It carries out the reaction (E)-coniferol + UDP-alpha-D-glucose = 4-O-(beta-D-glucosyl)-(E)-coniferol + UDP + H(+). It catalyses the reaction (E)-sinapyl alcohol + UDP-alpha-D-glucose = 4-O-(beta-D-glucosyl)-trans-4-sinapoyl alcohol + UDP + H(+). The catalysed reaction is (E)-sinapate + UDP-alpha-D-glucose = 4-O-(beta-D-glucosyl)-trans-sinapate + UDP + H(+). The enzyme catalyses (E)-coniferaldehyde + UDP-alpha-D-glucose = 4-O-(beta-D-glucosyl)-4-(E)-coniferyl aldehyde + UDP + H(+). It carries out the reaction (E)-sinapaldehyde + UDP-alpha-D-glucose = 4-O-(beta-D-glucosyl)-4-trans-sinapoyl aldehyde + UDP + H(+). Its function is as follows. Involved in the O-glucosylation of monolignols (alcohol monomers of lignin). Glucosylates coniferyl alcohol to form coniferyl alcohol 4-O-glucoside. Glucosylates sinapyl alcohol to form sinapyl alcohol 4-O-glucoside. Glucosylates coniferyl aldehyde to form coniferyl aldehyde 4-O-glucoside. Glucosylates sinapyl aldehyde to form sinapyl aldehyde 4-O-glucoside. Possesses low activity with sinapate and ferulate as substrates. This Arabidopsis thaliana (Mouse-ear cress) protein is UDP-glycosyltransferase 72E2.